The chain runs to 600 residues: Kelch-like protein 24 (600 aa).

Positions 66–133 constitute a BTB domain; that stretch reads TDVIICVEGK…VYTGKVKITT (68 aa). One can recognise a BACK domain in the interval 168–270; sequence CLGIQRFADT…HPNYFVQTVE (103 aa). Kelch repeat units follow at residues 314 to 363, 365 to 407, 408 to 454, 456 to 502, 504 to 544, and 546 to 592; these read VIVV…ALRN, ILVS…VLLG, KVYV…SCIG, LFVI…SLNN, IYVA…VCNG, and IYIL…TIHR.

As to quaternary structure, forms homodimers. Interacts with GRIK2. Component of the BCR(KLHL24) E3 ubiquitin ligase complex, composed of CUL3, RBX1 and KLHL24. Interacts with CUL3. Interacts with KRT14. Post-translationally, autoubiquitinated. Autoubiquitination leads to proteasomal degradation and is necessary to control KLHL24 levels. Expressed in the brain.

Its subcellular location is the perikaryon. It localises to the cell projection. The protein resides in the axon. The protein localises to the cytoplasm. It is found in the cell junction. Its subcellular location is the desmosome. It localises to the adherens junction. Functionally, controls KRT14 levels during keratinocytes differentiation. As part of the BCR(KLHL24) E3 ubiquitin ligase complex, mediates ubiquitination of KRT14. Specifically reduces kainate receptor-mediated currents in hippocampal neurons, most probably by modulating channel properties. Has a crucial role in cardiac development and function. This Mus musculus (Mouse) protein is Kelch-like protein 24 (Klhl24).